A 710-amino-acid chain; its full sequence is Ferrioxamine receptor (710 aa).

The signal sequence occupies residues 1–26 (MFSAFIIKRSAILCSLAMFIPLASIA). Positions 28 to 35 (DTIEVTAK) match the TonB box motif. 30 consecutive transmembrane segments (beta stranded) span residues 29–37 (TIEVTAKAG), 65–73 (TAQSVSVVT), 91–99 (YTPGVFTGF), 106–114 (YDTVALRGF), 137–145 (NVLQVDPWF), 152–160 (IKGPSSALY), 180–188 (SEGHFRLTA), 194–202 (QVAAFDYTD), 208–216 (WAFRLTGIT), 259–267 (GGYHSAVPA), 271–279 (IYGQKLSRG), 293–301 (WQQIYSYEF), 309–317 (WSFRQNASY), 353–361 (FAVDNQLEA), 370–378 (HKVLLGVDF), 427–435 (YEQSGVYLQ), 443–451 (WHLNLSGRY), 476–484 (GRASLLYSF), 491–499 (YVSYSQAIT), 517–525 (EQYEVGIIY), 531–539 (TSLYSAALY), 555–563 (YYVPAGKVN), 567–575 (LELEARSQI), 579–587 (LSVIAGYTY), 610–618 (NMASLWAQY), 624–632 (INVGAGIRY), 649–657 (YTLGDASVR), 671–679 (FVQLNVNNI), 684–692 (YVAACYSTS), and 702–710 (VQATVGYDF). Residues 61 to 174 (PLILTAQSVS…PGGVVMMTSK (114 aa)) form the TBDR plug domain. The 530-residue stretch at 181–710 (EGHFRLTAGN…SVQATVGYDF (530 aa)) folds into the TBDR beta-barrel domain. Residues 693 to 710 (YCYWGAERSVQATVGYDF) carry the TonB C-terminal box motif.

The protein belongs to the TonB-dependent receptor family.

It localises to the cell outer membrane. In terms of biological role, ferrioxamine binding and uptake, in association with the TonB protein. The chain is Ferrioxamine receptor (foxA) from Yersinia enterocolitica.